The sequence spans 533 residues: MDATAFHPSLWGDFFVKYEPPTAPKRGHMTQRAELLKEEVRKTLKAAANQIKNALDLIITLQRLGLDHHYENEISELLRFVYSSSDYDDKDLYVVSLRFYLLRKHGHRVSSDVFMSFKDEEGNFVVDDTKCLLSLYNAAYLMTHGEKVLDEAITFTRRQLEALLLDPLEPALADEVYLTLQTPLFRRLRILEAVNYIPIYGKEAGRNEAILELAKLNFNLAQLIYCEELKEVTLWWKQLNVETNLSFIRDRIVECHFWMTGACCEPRYSLSRVIATKMTALITVLDDMMDTYSTTEEAMLLAEAIYRWEENAAELLPGYMKHFYLYLLKTIDSCGGELGPNRSFRTFYLKEMLKVFVRGSSQEIKWRNENYVPKTISEHLEHSGPTVGAFQVACSSFVGMGDNITKESFEWLLTYPELVKSLMNIARLLNDTASTKREQTAGHHVSTVQCYMLKHGTTMDEACEKIKELTEDSWKDMMELYLTPTEHPKLVAQTIVDFARTADYMYKETDGFTFSHTIKDMIAKLFVDPISLF.

Mg(2+) is bound by residues Asp-286, Asp-290, Asn-430, Ser-434, and Glu-438. Positions 286-290 (DDMMD) match the DDXXD motif motif.

The protein belongs to the terpene synthase family. The cofactor is Mg(2+). Co(2+) serves as cofactor. Mn(2+) is required as a cofactor.

It is found in the cytoplasm. The catalysed reaction is (2E,6E)-farnesyl diphosphate = (E)-beta-farnesene + diphosphate. It participates in secondary metabolite biosynthesis; terpenoid biosynthesis. Sesquiterpene cyclase catalyzing the production of sixfold more beta-farnesene than alpha-bergamotene from farnesyl diphosphate. Involved in indirect defense by producing volatile signals attracting natural enemies of herbivores. In Zea perennis (Perennial teosinte), this protein is (E)-beta-farnesene synthase.